The chain runs to 488 residues: Elongation factor Tu, chloroplastic (488 aa).

Residues 1–20 (MALSSTAATTSSKLKLSNPP) form a disordered region. The N-terminal 79 residues, 1-79 (MALSSTAATT…RPSSSPFTVR (79 aa)), are a transit peptide targeting the chloroplast. In terms of domain architecture, tr-type G spans 89–293 (KPHLNIGTIG…EVDKYIPIPQ (205 aa)). Positions 98 to 105 (GHVDHGKT) are G1. A GTP-binding site is contributed by 98 to 105 (GHVDHGKT). The tract at residues 139–143 (GITIN) is G2. A G3 region spans residues 160 to 163 (DCPG). GTP contacts are provided by residues 160 to 164 (DCPGH) and 215 to 218 (NKQD). Positions 215–218 (NKQD) are G4. The tract at residues 253 to 255 (SAL) is G5.

Belongs to the TRAFAC class translation factor GTPase superfamily. Classic translation factor GTPase family. EF-Tu/EF-1A subfamily. As to expression, higher expression in leaves than in roots.

The protein localises to the plastid. Its subcellular location is the chloroplast. Functionally, this protein promotes the GTP-dependent binding of aminoacyl-tRNA to the A-site of ribosomes during protein biosynthesis. The protein is Elongation factor Tu, chloroplastic (tufA) of Pisum sativum (Garden pea).